We begin with the raw amino-acid sequence, 168 residues long: Protein OPG162 (168 aa).

The Intravirion portion of the chain corresponds to 1–14; it reads MKSLNRQTVSRFKK. Residues 15–37 traverse the membrane as a helical segment; sequence LSVPAAIMMILSTIISGIGTFLH. Over 38–168 the chain is Virion surface; sequence YKEELMPSAC…SVLCVKKFYK (131 aa). One can recognise a C-type lectin domain in the interval 54 to 163; that stretch reads YDKHCYLDTN…CKSTQSVLCV (110 aa). Cystine bridges form between cysteine 75–cysteine 162 and cysteine 141–cysteine 154. The N-linked (GlcNAc...) asparagine; by host glycan is linked to asparagine 133.

It belongs to the orthopoxvirus OPG162 protein family. As to quaternary structure, interacts with protein OPG161. Interacts with protein OPG164. Interacts with protein OPG190.

Its subcellular location is the virion membrane. It localises to the host Golgi apparatus. Forms a complex with OPG162 and OPG190 to coordinate the incorporation of OPG164 into wrapped enveloped virion (EV) membranes and, subsequently, the production of actin tails. Therefore plays an essential role in efficient cell-to-cell spread of viral particles. The sequence is that of Protein OPG162 (OPG162) from Vaccinia virus (strain Western Reserve) (VACV).